The sequence spans 264 residues: MHSCWNMKLQNEKTLGHSVSRSSNISKAGSPTSVSAPSRFPRTSVTPSSQDICRICHCEGDDESPLITPCHCTGSLHFVHQACLQQWIKSSDTRCCELCKFEFIMETKLKPLRKWEKLQMTASERRKIMCSVTFHVIAITCVVWSLYVLIDRTAEEIRMGQNNGILEWPFWTKLVVVAIGFTGGLLFMYVQCKVYVQLWKRLKAYNRVIYVQNCPETCKKKIFEKSVIIEPNLESKEALGIHHSDTNSSYYTEPEDCGAAILQV.

Residues 15–47 form a disordered region; it reads LGHSVSRSSNISKAGSPTSVSAPSRFPRTSVTP. Over residues 16–47 the composition is skewed to polar residues; that stretch reads GHSVSRSSNISKAGSPTSVSAPSRFPRTSVTP. Residues 45–106 form an RING-CH-type zinc finger; it reads VTPSSQDICR…ELCKFEFIME (62 aa). Residues C53, C56, C70, C72, H80, C83, C96, and C99 each contribute to the Zn(2+) site. Transmembrane regions (helical) follow at residues 130-150 and 170-190; these read CSVT…YVLI and FWTK…FMYV.

It localises to the cytoplasmic vesicle membrane. Its subcellular location is the lysosome membrane. It is found in the early endosome membrane. The enzyme catalyses S-ubiquitinyl-[E2 ubiquitin-conjugating enzyme]-L-cysteine + [acceptor protein]-L-lysine = [E2 ubiquitin-conjugating enzyme]-L-cysteine + N(6)-ubiquitinyl-[acceptor protein]-L-lysine.. It participates in protein modification; protein ubiquitination. In terms of biological role, E3 ubiquitin-protein ligase that mediates ubiquitination of cd86 and MHC class II proteins, such as hla-dr alpha and beta, and promotes their subsequent endocytosis and sorting to lysosomes via multivesicular bodies. This chain is E3 ubiquitin-protein ligase MARCHF8 (marchf8), found in Xenopus laevis (African clawed frog).